A 509-amino-acid chain; its full sequence is FAD-linked oxidoreductase anuG (509 aa).

The N-terminal stretch at 1–21 (MVQISNVWGFGLAIMASLAAA) is a signal peptide. The 172-residue stretch at 75-246 (YAAPKFTVVV…TSFEMSIYPT (172 aa)) folds into the FAD-binding PCMH-type domain.

The protein belongs to the oxygen-dependent FAD-linked oxidoreductase family. It depends on FAD as a cofactor.

It catalyses the reaction (2S,9S)-annullatin H + 2 A = (2S,9S)-annullatin D + 2 AH2. The protein operates within secondary metabolite biosynthesis. Cytochrome P450 monooxygenase; part of the gene cluster that mediates the biosynthesis of annullatin D, an alkylated aromatic polyketide with a fused dihydrobenzofuran lactone ring system that exhibits potent agonistic activities toward the cannabinoid receptors. Within the pathway, anuG is responsible for the five-member lactone ring formation in (2S, 9S)-annullatin D via oxidative lactonization between the two hydroxyl groups. The annullatin backbone 2-hydroxymethyl-3-pentylphenol is assembled from one acetyl-CoA starter unit and 5 malonyl-CoA elongation units by cooperation of the highly reducing polyketide synthase anuA, the short-chain dehydrogenase anuB and the oxidoreductase anuC, before being hydroxylated at the C-5 alkyl chain by the cytochrome P450 monooxygenase anuE to form (8S)-annullatin E. The prenyltransferase anuH subsequently installs one isoprenyl group at the benzene ring to form (8S)-annullatin J. Enzymatic or nonenzymatic dihydro-benzofuran ring formation between the prenyl and the phenolic hydroxyl groups in (8S)-annullatin J results in two diastereomers (2S,9S)-annullatin H and compound 12. The intermediate (2S,9S)-annullatin H is then converted to (2S,9S)-annullatin D by the FAD-linked oxidoreductase anuG-catalyzed five-member lactone ring formation. The isomer 12 acts as a substrate for the short-chain dehydrogenase anuF and is oxidized to (2R)-annullatin F, which is subsequently acetylated by an acetyltransferase leading to (2R)-annullatin G formation. The remaining enzymes identified within the cluster, anuD, anuI and anuJ, seem not to be involved in annullatin biosynthesis. The chain is FAD-linked oxidoreductase anuG from Penicillium roqueforti (strain FM164).